We begin with the raw amino-acid sequence, 242 residues long: Ferritin, mitochondrial (242 aa).

Residues 1–49 constitute a mitochondrion transit peptide; the sequence is MLSCFRLLSRHISPSLASLRPVRCCFALPLRWAPGRPLDPRQIAPRRPL. Residues 47 to 58 are compositionally biased toward low complexity; sequence RPLAAAASSRDP. The tract at residues 47–71 is disordered; sequence RPLAAAASSRDPTGPAAGPSRVRQN. The region spanning 70-219 is the Ferritin-like diiron domain; it reads QNFHPDSEAA…DHVHNLVKMG (150 aa). Fe cation is bound by residues glutamate 87, glutamate 122, histidine 125, glutamate 167, and glutamine 201.

This sequence belongs to the ferritin family. In terms of assembly, homooligomer of 24 subunits. The functional molecule is roughly spherical and contains a central cavity into which the polymeric mineral iron core is deposited. Detected in testis and erythroleukemia. Expression is very low or not detectable in brain, colon, heart, kidney, liver, lung, muscle, placental, spleen and small intestine.

The protein localises to the mitochondrion. It catalyses the reaction 4 Fe(2+) + O2 + 4 H(+) = 4 Fe(3+) + 2 H2O. Catalyzes the oxidation of ferrous iron(II) to ferric iron(III) and stores iron in a soluble, non-toxic, readily available form. Important for iron homeostasis. Iron is taken up in the ferrous form and deposited as ferric hydroxides after oxidation. This chain is Ferritin, mitochondrial, found in Homo sapiens (Human).